An 849-amino-acid polypeptide reads, in one-letter code: Putative respiratory burst oxidase homolog protein G (849 aa).

The segment covering 1 to 17 has biased composition (basic and acidic residues); sequence MQRVSFEVKDTEAEKSS. A disordered region spans residues 1–53; it reads MQRVSFEVKDTEAEKSSSEILSGSLPSTYRNPAMENVGNAVDDGSSVKNNPKL. Residues 1 to 303 are Cytoplasmic-facing; that stretch reads MQRVSFEVKD…RFFVLDSWQR (303 aa). Positions 18–27 are enriched in low complexity; it reads SEILSGSLPS. EF-hand-like regions lie at residues 118-128 and 153-164; these read TANTDGLLLRS and SHLKGDVITETE. EF-hand domains follow at residues 176–211 and 220–255; these read SFDS…SSSA and KADE…AETK. D189, D191, D193, R195, and E200 together coordinate Ca(2+). S270 is subject to Phosphoserine. A helical transmembrane segment spans residues 304-324; it reads VWVIALWLTIMAILFAYKYIQ. Over 325-392 the chain is Extracellular; the sequence is YKNRAVYEVL…LNFHKVIAVG (68 aa). One can recognise a Ferric oxidoreductase domain in the interval 342–502; sequence KGAAETLKLN…LFVIVYILLV (161 aa). Residues 393–409 traverse the membrane as a helical segment; that stretch reads IAIGVAIHSVSHLACDF. Residues 410–444 lie on the Cytoplasmic side of the membrane; that stretch reads PLLIAATPAEYMPLGKFFGEEQPKRYLHFVKSTEG. The helical transmembrane segment at 445 to 465 threads the bilayer; sequence ITGLVMVFLMVIAFTLAMPWF. Residues 466–489 are Extracellular-facing; the sequence is RRGKLEKKLPGPLKKLASFNAFWY. The helical transmembrane segment at 490–510 threads the bilayer; it reads THHLFVIVYILLVLHGYYIYL. The Cytoplasmic portion of the chain corresponds to 511 to 518; that stretch reads NKEWYKKT. A helical transmembrane segment spans residues 519 to 536; sequence TWMYLAVPVALYAYERLI. Residues 537–659 lie on the Extracellular side of the membrane; that stretch reads RAFRSSIRTV…PYGAPAQDYK (123 aa). The 117-residue stretch at 541–657 folds into the FAD-binding FR-type domain; the sequence is SSIRTVKVLK…DGPYGAPAQD (117 aa). The chain crosses the membrane as a helical span at residues 660–680; sequence KYEVVLLIGLGIGATPMISII. At 681–849 the chain is on the cytoplasmic side; sequence KDIINNTETK…TRFSFHKENF (169 aa).

The protein belongs to the RBOH (TC 5.B.1.3) family. As to quaternary structure, monomer and homodimer.

Its subcellular location is the membrane. Calcium-dependent NADPH oxidase that generates superoxide. This Arabidopsis thaliana (Mouse-ear cress) protein is Putative respiratory burst oxidase homolog protein G (RBOHG).